The sequence spans 79 residues: Putative antitoxin VapB1 (79 aa).

In terms of biological role, antitoxin component of a possible type II toxin-antitoxin (TA) system. The cognate toxin is VapC1. The sequence is that of Putative antitoxin VapB1 (vapB1) from Mycobacterium tuberculosis (strain ATCC 25618 / H37Rv).